The sequence spans 239 residues: MVQHLSAEEIIQYISDAKKSTPLKVYVNGNFDGVTFPDSFKVFGSDNSKVIFCEADDWKPFYESNQSTITELEIEMDRRNSAIPLKDLTNTNARIEPGAFIREQAIIEDGAVVMMGATINIGAVVGEGTMIDMNATLGGRATTGKNVHVGAGAVLAGVIEPPSASPVVIDDNVLIGANAVILEGVHVGEGAIVAAGAIVTQDVPAGAVVAGTPAKVIKQTSEVEDSKREIVSALRKLND.

Belongs to the transferase hexapeptide repeat family. DapH subfamily.

The enzyme catalyses (S)-2,3,4,5-tetrahydrodipicolinate + acetyl-CoA + H2O = L-2-acetamido-6-oxoheptanedioate + CoA. It participates in amino-acid biosynthesis; L-lysine biosynthesis via DAP pathway; LL-2,6-diaminopimelate from (S)-tetrahydrodipicolinate (acetylase route): step 1/3. Its function is as follows. Catalyzes the transfer of an acetyl group from acetyl-CoA to tetrahydrodipicolinate. The sequence is that of 2,3,4,5-tetrahydropyridine-2,6-dicarboxylate N-acetyltransferase from Staphylococcus haemolyticus (strain JCSC1435).